Reading from the N-terminus, the 82-residue chain is Cobrotoxin-b (82 aa).

The signal sequence occupies residues 1–21 (MKTLLLTLLVVTIVCLDLGYT). Disulfide bonds link Cys24–Cys44, Cys38–Cys61, Cys63–Cys74, and Cys75–Cys80.

This sequence belongs to the three-finger toxin family. Short-chain subfamily. Type I alpha-neurotoxin sub-subfamily. Expressed by the venom gland.

It is found in the secreted. Its function is as follows. Binds to muscle nicotinic acetylcholine receptor (nAChR) and inhibit acetylcholine from binding to the receptor, thereby impairing neuromuscular transmission. Produces peripheral paralysis by blocking neuromuscular transmission at the postsynaptic site. Has a lower toxicity than cobrotoxin. This is Cobrotoxin-b from Naja atra (Chinese cobra).